A 623-amino-acid chain; its full sequence is tRNA uridine 5-carboxymethylaminomethyl modification enzyme MnmG (623 aa).

12 to 17 (GAGHAG) provides a ligand contact to FAD. 272-286 (GPRYCPSIEDKINRF) is an NAD(+) binding site.

Belongs to the MnmG family. As to quaternary structure, homodimer. Heterotetramer of two MnmE and two MnmG subunits. FAD serves as cofactor.

The protein resides in the cytoplasm. In terms of biological role, NAD-binding protein involved in the addition of a carboxymethylaminomethyl (cmnm) group at the wobble position (U34) of certain tRNAs, forming tRNA-cmnm(5)s(2)U34. The sequence is that of tRNA uridine 5-carboxymethylaminomethyl modification enzyme MnmG from Flavobacterium johnsoniae (strain ATCC 17061 / DSM 2064 / JCM 8514 / BCRC 14874 / CCUG 350202 / NBRC 14942 / NCIMB 11054 / UW101) (Cytophaga johnsonae).